A 287-amino-acid chain; its full sequence is 4-hydroxybenzoate octaprenyltransferase (287 aa).

7 consecutive transmembrane segments (helical) span residues 23–40, 99–119, 141–161, 163–183, 213–233, 235–255, and 266–286; these read IGSL…WLAG, LFVV…TMTI, LPQF…YAAV, ESLP…TVAY, LIIG…GTMT, LGMP…YQQI, and FKAF…VLFG.

The protein belongs to the UbiA prenyltransferase family. Requires Mg(2+) as cofactor.

The protein localises to the cell inner membrane. It catalyses the reaction all-trans-octaprenyl diphosphate + 4-hydroxybenzoate = 4-hydroxy-3-(all-trans-octaprenyl)benzoate + diphosphate. Its pathway is cofactor biosynthesis; ubiquinone biosynthesis. Functionally, catalyzes the prenylation of para-hydroxybenzoate (PHB) with an all-trans polyprenyl group. Mediates the second step in the final reaction sequence of ubiquinone-8 (UQ-8) biosynthesis, which is the condensation of the polyisoprenoid side chain with PHB, generating the first membrane-bound Q intermediate 3-octaprenyl-4-hydroxybenzoate. The polypeptide is 4-hydroxybenzoate octaprenyltransferase (Pectobacterium carotovorum subsp. carotovorum (strain PC1)).